A 419-amino-acid chain; its full sequence is Subtilisin-like protease 2 (419 aa).

The first 16 residues, 1-16 (MQLLNFGLLLLPFVAG), serve as a signal peptide directing secretion. The propeptide occupies 17–122 (DLAPQPEPLL…VHPDQHVYLA (106 aa)). The 87-residue stretch at 36–122 (QYIVTLKEGL…VHPDQHVYLA (87 aa)) folds into the Inhibitor I9 domain. The Peptidase S8 domain occupies 131-419 (RWGLGYMSSK…IQERKFKLPK (289 aa)). Residues aspartate 169 and histidine 201 each act as charge relay system in the active site. 3 N-linked (GlcNAc...) asparagine glycosylation sites follow: asparagine 248, asparagine 261, and asparagine 348. Serine 357 (charge relay system) is an active-site residue. Asparagine 388 carries N-linked (GlcNAc...) asparagine glycosylation.

This sequence belongs to the peptidase S8 family.

Its subcellular location is the secreted. Its function is as follows. Secreted subtilisin-like serine protease with keratinolytic activity that contributes to pathogenicity. The sequence is that of Subtilisin-like protease 2 (SUB2) from Arthroderma benhamiae (Trichophyton mentagrophytes).